We begin with the raw amino-acid sequence, 624 residues long: UvrABC system protein C (624 aa).

One can recognise a GIY-YIG domain in the interval 25 to 104 (AEPGVYFMRD…IKQHQPHFNV (80 aa)). In terms of domain architecture, UVR spans 214 to 249 (SELIDTLTPQMEAAAENLNFEQAARIRDQINGLKTL).

This sequence belongs to the UvrC family. As to quaternary structure, interacts with UvrB in an incision complex.

It is found in the cytoplasm. Functionally, the UvrABC repair system catalyzes the recognition and processing of DNA lesions. UvrC both incises the 5' and 3' sides of the lesion. The N-terminal half is responsible for the 3' incision and the C-terminal half is responsible for the 5' incision. The protein is UvrABC system protein C of Cyanothece sp. (strain PCC 7425 / ATCC 29141).